A 934-amino-acid polypeptide reads, in one-letter code: Desmocollin 2-like protein (934 aa).

Cadherin domains are found at residues 167 to 274 (RWRP…APEF), 274 to 381 (FTGN…PPTF), 382 to 494 (KEKL…GPEF), and 495 to 600 (NPNI…IPVI). At 167-716 (RWRPLPFSVV…SASVSLGNYG (550 aa)) the chain is on the extracellular side. Residues Asn-197, Asn-296, and Asn-316 are each glycosylated (N-linked (GlcNAc...) asparagine). N-linked (GlcNAc...) asparagine glycosylation is found at Asn-509, Asn-565, and Asn-569. The chain crosses the membrane as a helical span at residues 717–737 (ILALVLSGLLLLLLCLFLIFF). Residues 738–934 (CTTKRDKLQI…ICYTTNKTGK (197 aa)) lie on the Cytoplasmic side of the membrane.

In terms of tissue distribution, expressed at low levels in the brain and heart.

It localises to the cell junction. Its subcellular location is the desmosome. It is found in the cell membrane. A component of desmosome cell-cell junctions which are required for positive regulation of cellular adhesion. Involved in the interaction of plaque proteins and intermediate filaments mediating cell-cell adhesion. Involved in the formation and structural organization of desmosome cell-cell junctions during embryonic development. Required for embryogenesis, specifically for progression of epiboly and normal convergence-extension movements during gastrulation. Required for the development of desmosomal-rich midlines in the heart. Plays an important role in ventricular contraction and resulting heart stroke volume. The protein is Desmocollin 2-like protein of Danio rerio (Zebrafish).